A 317-amino-acid chain; its full sequence is L-lactate dehydrogenase 2 (317 aa).

Residues Val-16, Asp-37, Lys-42, Tyr-68, and 82–83 each bind NAD(+); that span reads GA. Substrate is bound by residues Gln-85 and Arg-91. Residues Thr-104, 121-123, and Thr-146 each bind NAD(+); that span reads ASN. A substrate-binding site is contributed by 123–126; sequence NPVD. Residue 151 to 154 coordinates substrate; sequence DTTR. Residues Arg-156 and His-171 each contribute to the beta-D-fructose 1,6-bisphosphate site. His-178 functions as the Proton acceptor in the catalytic mechanism. The residue at position 223 (Tyr-223) is a Phosphotyrosine. Thr-232 is a binding site for substrate.

The protein belongs to the LDH/MDH superfamily. LDH family. In terms of assembly, homotetramer.

The protein localises to the cytoplasm. The catalysed reaction is (S)-lactate + NAD(+) = pyruvate + NADH + H(+). Its pathway is fermentation; pyruvate fermentation to lactate; (S)-lactate from pyruvate: step 1/1. Its activity is regulated as follows. Allosterically activated by fructose 1,6-bisphosphate (FBP). Functionally, catalyzes the conversion of lactate to pyruvate. In Enterococcus faecalis (strain ATCC 700802 / V583), this protein is L-lactate dehydrogenase 2.